The following is a 530-amino-acid chain: Chitin synthase 1 (530 aa).

N-linked (GlcNAc...) asparagine glycosylation occurs at N17. A disordered region spans residues 22–94 (QESSSNLIQQ…QANNNRKVTR (73 aa)). A compositionally biased stretch (polar residues) spans 24-56 (SSSNLIQQQQPGTNYARNQQTLSSLRSQKQQAE). N118, N310, and N474 each carry an N-linked (GlcNAc...) asparagine glycan. The next 2 membrane-spanning stretches (helical) occupy residues 477–497 (FFAG…GHGF) and 508–528 (IYNV…LSFL).

Belongs to the chitin synthase family. Class II subfamily.

It localises to the cell membrane. The catalysed reaction is [(1-&gt;4)-N-acetyl-beta-D-glucosaminyl](n) + UDP-N-acetyl-alpha-D-glucosamine = [(1-&gt;4)-N-acetyl-beta-D-glucosaminyl](n+1) + UDP + H(+). In terms of biological role, polymerizes chitin, a structural polymer of the cell wall and septum, by transferring the sugar moiety of UDP-GlcNAc to the non-reducing end of the growing chitin polymer. The polypeptide is Chitin synthase 1 (Rhizopus delemar (strain RA 99-880 / ATCC MYA-4621 / FGSC 9543 / NRRL 43880) (Mucormycosis agent)).